A 435-amino-acid chain; its full sequence is GPI-anchor transamidase component PIGU (435 aa).

Over Ala2–Ala3 the chain is Cytoplasmic. The helical transmembrane segment at Pro4 to Ser22 threads the bilayer. Residues Ser23–Asp78 are Lumenal-facing. Residues Tyr79–Ile99 traverse the membrane as a helical segment. The Cytoplasmic portion of the chain corresponds to Gln100–Ile136. The next 4 membrane-spanning stretches (helical) occupy residues Pro137–Ser158, Thr159–Ser178, Ala179–Leu194, and Tyr195–Leu205. Over Tyr206–Phe222 the chain is Cytoplasmic. Residues Lys216 and Met217 each coordinate a cardiolipin. Residues Trp223 to Ser244 traverse the membrane as a helical segment. At Phe245–Ser286 the chain is on the lumenal side. Residues Leu287–Ile306 traverse the membrane as a helical segment. The Cytoplasmic portion of the chain corresponds to Lys307–His311. Position 309 (Lys309) interacts with a cardiolipin. 2 consecutive transmembrane segments (helical) span residues Pro312 to Thr331 and Val332 to Trp345. The Cytoplasmic portion of the chain corresponds to Asn346 to Asn354. Residues Ile355 to Leu372 form a helical membrane-spanning segment. Over Trp373–Ser384 the chain is Lumenal. Residues Asn383 and Asn385 each contribute to the a 2-acyl-6-[6-phosphoethanolamine-alpha-D-mannosyl-(1-&gt;2)-6-phosphoethanolamine-alpha-D-mannosyl-(1-&gt;6)-2-phosphoethanolamine-alpha-D-mannosyl-(1-&gt;4)-alpha-D-glucosaminyl]-1-(1-radyl,2-acyl-sn-glycero-3-phospho)-1D-myo-inositol site. A helical transmembrane segment spans residues Asn385–Phe406. Residues Tyr407–Lys435 are Cytoplasmic-facing.

This sequence belongs to the PIGU family. As to quaternary structure, heteropentamer. Part of the GPI-anchor transamidase complex, consisting of PIGK, PIGT, PIGS, PIGU and GAA1.

It localises to the endoplasmic reticulum membrane. The protein operates within glycolipid biosynthesis; glycosylphosphatidylinositol-anchor biosynthesis. Functionally, component of the glycosylphosphatidylinositol-anchor (GPI-anchor) transamidase (GPI-T) complex that catalyzes the formation of the linkage between a proprotein and a GPI-anchor and participates in GPI anchored protein biosynthesis. Binds the lipid portion of GPI-anchor. May act as an organizer in the transmembrane layer to recruit other subunits, and thus is essential for assembly of the complex. The sequence is that of GPI-anchor transamidase component PIGU from Homo sapiens (Human).